A 633-amino-acid polypeptide reads, in one-letter code: Early transcription factor 70 kDa subunit (633 aa).

The region spanning 32 to 185 is the Helicase ATP-binding domain; it reads RTILDHNESV…SNIISIMSDE (154 aa). 45 to 52 serves as a coordination point for ATP; it reads HIMGSGKT. A DEXH box motif is present at residues 135–138; it reads DEAH. A Helicase C-terminal domain is found at 326–505; the sequence is KFKYFIDTIG…TLPFDIKKLL (180 aa).

It belongs to the helicase family. VETF subfamily. As to quaternary structure, heterodimer of a 70 kDa and a 82 kDa subunit. Part of the early transcription complex composed of ETF, RAP94, and the DNA-directed RNA polymerase.

The protein resides in the virion. Functionally, acts with RNA polymerase to initiate transcription from early gene promoters. Is recruited by the RPO-associated protein of 94 kDa (RAP94) to form the early transcription complex, which also contains the core RNA polymerase. ETF heterodimer binds to early gene promoters. This is Early transcription factor 70 kDa subunit (VETFS) from Vertebrata (FPV).